The sequence spans 353 residues: Alanine racemase (353 aa).

The active-site Proton acceptor; specific for D-alanine is Lys-34. Lys-34 carries the N6-(pyridoxal phosphate)lysine modification. A substrate-binding site is contributed by Arg-128. Catalysis depends on Tyr-251, which acts as the Proton acceptor; specific for L-alanine. Residue Met-299 participates in substrate binding.

It belongs to the alanine racemase family. The cofactor is pyridoxal 5'-phosphate.

The catalysed reaction is L-alanine = D-alanine. It functions in the pathway amino-acid biosynthesis; D-alanine biosynthesis; D-alanine from L-alanine: step 1/1. Catalyzes the interconversion of L-alanine and D-alanine. May also act on other amino acids. This Alcanivorax borkumensis (strain ATCC 700651 / DSM 11573 / NCIMB 13689 / SK2) protein is Alanine racemase (alr).